The primary structure comprises 503 residues: Alpha-1B-glycoprotein (503 aa).

The signal sequence occupies residues 1–21 (MSAWAALLLLWGLSLSPVTEQ). Ig-like V-type domains follow at residues 27-115 (PRPS…EVTG), 117-204 (EPLP…TVTI), 208-305 (DPPP…LVLS), 307-405 (GTLP…LRVD), and 406-501 (GPLP…LRVA). An intrachain disulfide couples C49 to C96. N137 and N182 each carry an N-linked (GlcNAc...) asparagine glycan. Cystine bridges form between C142/C185, C235/C282, C333/C382, and C431/C478. N379 carries N-linked (GlcNAc...) asparagine glycosylation.

Interacts with CRISP3. Plasma.

The protein resides in the secreted. The protein is Alpha-1B-glycoprotein of Bos taurus (Bovine).